The sequence spans 486 residues: MRTEWIAKRSGHKNVSQMHYGRQGIITEEMNFVAQRENLPAELIRAEVARGRMIIPANINHTNLEPMCIGIASRCKVNANIGASPNTSDITKEVDKLKLSIKYGADTVMDLSTGGGNLDEIRTAIINASPVPIGTVPVYQAVESVHGRIENLTADDFLHVIEKHAQQGVDYQTIHAGILIEHLPLVRSRITGIVSRGGGIIAKWMLHHHKQNPLYTHFDDIIEIFKKYDVSFSLGDSLRPGCTHDASDEAQLAELKTLGQLTRRAWGHEVQVMVEGPGHVPMDQIEFNVKKQMEECSSPPLNALDLDPLASNANEQMEKFNVLGPAPFYVLGPLVTDIAPGYDHITSAIGAAMAGWYGTAMLCYVTPKEHLGLPNAEDVRNGLIAYKIAAHAADIGRHRQGARDRDDELSAARYNFDWNRQFELSLDPERAKEYHDETLPADIYKTAEFCSMCGPKFCPMQTKVDADALTELEKFLAKEKEVVTQS.

Residues asparagine 80, methionine 109, tyrosine 139, histidine 175, 195-197, 236-239, and glutamate 275 contribute to the substrate site; these read SRG and DSLR. Histidine 279 serves as a coordination point for Zn(2+). Residue tyrosine 329 participates in substrate binding. Histidine 370 lines the Zn(2+) pocket. [4Fe-4S] cluster contacts are provided by cysteine 450, cysteine 453, and cysteine 458.

Belongs to the ThiC family. [4Fe-4S] cluster serves as cofactor.

The catalysed reaction is 5-amino-1-(5-phospho-beta-D-ribosyl)imidazole + S-adenosyl-L-methionine = 4-amino-2-methyl-5-(phosphooxymethyl)pyrimidine + CO + 5'-deoxyadenosine + formate + L-methionine + 3 H(+). Its pathway is cofactor biosynthesis; thiamine diphosphate biosynthesis. Catalyzes the synthesis of the hydroxymethylpyrimidine phosphate (HMP-P) moiety of thiamine from aminoimidazole ribotide (AIR) in a radical S-adenosyl-L-methionine (SAM)-dependent reaction. The chain is Phosphomethylpyrimidine synthase from Trichodesmium erythraeum (strain IMS101).